The chain runs to 971 residues: Sodium/calcium exchanger 1 (971 aa).

An N-terminal signal peptide occupies residues 1–32; that stretch reads MLRLSLPPNVSMGFRLVTLVALLFTHVDHITA. Residues 33–71 are Extracellular-facing; that stretch reads DTEAETGGNETTECTGSYYCKKGVILPIWEPQDPSFGDK. The N-linked (GlcNAc...) asparagine glycan is linked to Asn41. A helical membrane pass occupies residues 72-92; it reads IARATVYFVAMVYMFLGVSII. The Cytoplasmic segment spans residues 93–133; the sequence is ADRFMSSIEVITSQEKEITIKKPNGETTKTTVRIWNETVSN. The helical transmembrane segment at 134–154 threads the bilayer; it reads LTLMALGSSAPEILLSVIEVC. The stretch at 138 to 178 is one Alpha-1 repeat; sequence ALGSSAPEILLSVIEVCGHNFTAGDLGPSTIVGSAAFNMFI. At 155-167 the chain is on the extracellular side; it reads GHNFTAGDLGPST. Residue Asn157 is glycosylated (N-linked (GlcNAc...) asparagine). Residues 168–188 form a helical membrane-spanning segment; the sequence is IVGSAAFNMFIIIALCVYVVP. Residues 189-201 lie on the Cytoplasmic side of the membrane; sequence DGETRKIKHLRVF. Residues 202-222 form a helical membrane-spanning segment; that stretch reads FVTAAWSIFAYTWLYIILSVS. The Extracellular portion of the chain corresponds to 223 to 228; sequence SPGVVE. The helical transmembrane segment at 229–249 threads the bilayer; it reads VWEGLLTFFFFPICVVFAWVA. Over 250-798 the chain is Cytoplasmic; sequence DRRLLFYKYV…FVPPTEYWNG (549 aa). Residues 251–270 form a putative calmodulin-binding region region; the sequence is RRLLFYKYVYKRYRAGKQRG. Ser282 and Ser389 each carry phosphoserine. Calx-beta domains are found at residues 393 to 493 and 524 to 624; these read VNMD…VHLS and ATIT…IEIG. Ca(2+) is bound by residues Glu417, Asp453, Asp478, Asp479, Ile481, Glu483, Glu486, Asp530, Asp531, Asp532, Glu548, Asp584, Asp610, Glu611, Glu612, and Glu716. The helical transmembrane segment at 799–819 threads the bilayer; the sequence is WACFIVSILMIGLLTAFIGDL. The Extracellular segment spans residues 820–822; the sequence is ASH. Residues 823–843 traverse the membrane as a helical segment; the sequence is FGCTIGLKDSVTAVVFVALGT. The stretch at 840 to 876 is one Alpha-2 repeat; sequence ALGTSVPDTFASKVAATQDQYADASIGNVTGSNAVNV. At 844–872 the chain is on the cytoplasmic side; it reads SVPDTFASKVAATQDQYADASIGNVTGSN. Residues 873-893 form a helical membrane-spanning segment; that stretch reads AVNVFLGIGVAWSIAAIYHAA. Over 894 to 904 the chain is Extracellular; that stretch reads NGEQFKVSPGT. Residues 905–925 traverse the membrane as a helical segment; the sequence is LAFSVTLFTIFAFINVGVLLY. Residues 926 to 942 are Cytoplasmic-facing; sequence RRRPEIGGELGGPRTAK. The chain crosses the membrane as a helical span at residues 943-963; sequence LLTSSLFVLLWLLYIFFSSLE. Residues 964-971 lie on the Extracellular side of the membrane; that stretch reads AYCHIKGF.

This sequence belongs to the Ca(2+):cation antiporter (CaCA) (TC 2.A.19) family. SLC8 subfamily. Detected in heart, brain cortex and hippocampus (at protein level). Cardiac sarcolemma or brain, and spleen. Expressed in all regions of the kidney, highest levels of expression in the distal convoluted tubule. Expressed throughout the CNS, in decreasing order of abundance in hippocampus, cortex, cerebellum, hypothalamus, midbrain and striatum. Expressed in numerous regions of the brain including multiple cortical layers, hippocampus, septal nuclei, thalamic nuclei, cerebellum, hypothalamus, olfactory bulb and brainstem. Also expressed in various regions of the spinal cord, ventricles and atria of the heart, lung, adrenals and kidney. Isoform 4 seems to be a predominant isoform in aorta, stomach, liver, and kidney.

It localises to the cell membrane. Its subcellular location is the cell projection. The protein localises to the dendrite. The catalysed reaction is Ca(2+)(in) + 3 Na(+)(out) = Ca(2+)(out) + 3 Na(+)(in). Activated by micromolar levels of Ca(2+). Its activity is regulated as follows. Only active at low calcium concentrations. Not activated by PKC. With respect to regulation, active at all calcium levels tested. Activated by PKC. Only active at low calcium concentrations. Activated by PKC. Mediates the exchange of one Ca(2+) ion against three to four Na(+) ions across the cell membrane, and thereby contributes to the regulation of cytoplasmic Ca(2+) levels and Ca(2+)-dependent cellular processes. Contributes to Ca(2+) transport during excitation-contraction coupling in muscle. In a first phase, voltage-gated channels mediate the rapid increase of cytoplasmic Ca(2+) levels due to release of Ca(2+) stores from the endoplasmic reticulum. SLC8A1 mediates the export of Ca(2+) from the cell during the next phase, so that cytoplasmic Ca(2+) levels rapidly return to baseline. Required for normal embryonic heart development and the onset of heart contractions. The sequence is that of Sodium/calcium exchanger 1 (Slc8a1) from Rattus norvegicus (Rat).